The chain runs to 502 residues: MSEQEVKELDLNGEMLVRREKLAALRAKGNAFPNKFRRDVLAQDLHNQYDSEDGEILKEKGVEVQVAGRIMTRRAMGKATFITIQDMSGKIQLYVARDNLPEGVYKDEVGTWDLGDIIGVKGTLFKTKTDELTVKTTEVQLLTKALRPLPDKFHGLTDQEVRYRQRYLDLISNEESRRTFIIRSKVVAGIREYFISKGFMEVETPMLQVIPGGASARPFVTHHNALDVDMYLRIAPELYLKRLVVGGFERVFELNRNFRNEGVSVRHNPEFTMLEYYQAYADYHDLMDNTEELLRKLAIDILGTTIVKYGEYEFDFGKPFERITLHDATVKYGADKGIVKEDLYDFDRAKATAERLGIEVQKSWGLGSIVNAIFEEVAEHHLIQPTFLMAHPAEISPLARRNDENPDVTDRFELFIGGREIGNGFSELNDAEDQNERFDAQVAAKEAGDDEAMFKDEDFVVALEHGLPPTAGEGLGIDRLAMLYANAPSIRDVILFPAMRQK.

Positions 413 and 420 each coordinate Mg(2+).

It belongs to the class-II aminoacyl-tRNA synthetase family. In terms of assembly, homodimer. The cofactor is Mg(2+).

The protein localises to the cytoplasm. The catalysed reaction is tRNA(Lys) + L-lysine + ATP = L-lysyl-tRNA(Lys) + AMP + diphosphate. This is Lysine--tRNA ligase from Haemophilus influenzae (strain PittGG).